Reading from the N-terminus, the 1183-residue chain is DNA-directed RNA polymerase subunit beta (1183 aa).

The protein belongs to the RNA polymerase beta chain family. In terms of assembly, the RNAP catalytic core consists of 2 alpha, 1 beta, 1 beta' and 1 omega subunit. When a sigma factor is associated with the core the holoenzyme is formed, which can initiate transcription.

The catalysed reaction is RNA(n) + a ribonucleoside 5'-triphosphate = RNA(n+1) + diphosphate. Functionally, DNA-dependent RNA polymerase catalyzes the transcription of DNA into RNA using the four ribonucleoside triphosphates as substrates. The sequence is that of DNA-directed RNA polymerase subunit beta from Staphylococcus aureus (strain COL).